The primary structure comprises 262 residues: Acyl-[acyl-carrier-protein]--UDP-N-acetylglucosamine O-acyltransferase (262 aa).

This sequence belongs to the transferase hexapeptide repeat family. LpxA subfamily. Homotrimer.

It is found in the cytoplasm. The enzyme catalyses a (3R)-hydroxyacyl-[ACP] + UDP-N-acetyl-alpha-D-glucosamine = a UDP-3-O-[(3R)-3-hydroxyacyl]-N-acetyl-alpha-D-glucosamine + holo-[ACP]. The protein operates within glycolipid biosynthesis; lipid IV(A) biosynthesis; lipid IV(A) from (3R)-3-hydroxytetradecanoyl-[acyl-carrier-protein] and UDP-N-acetyl-alpha-D-glucosamine: step 1/6. In terms of biological role, involved in the biosynthesis of lipid A, a phosphorylated glycolipid that anchors the lipopolysaccharide to the outer membrane of the cell. The chain is Acyl-[acyl-carrier-protein]--UDP-N-acetylglucosamine O-acyltransferase from Histophilus somni (strain 129Pt) (Haemophilus somnus).